The chain runs to 548 residues: MDSQRNLLVIALLFVSFMIWQAWEQDKNPQPQTQQTTQTTTTAAGSAADQGVPASGQGKMITVKTDVLDLTINTRGGDVEQALLPAYPKELGSNEPFQLLETTPQFIYQAQSGLTGRDGPDNPANGPRPLYNVEKEAFVLADGQNELQVPMTYTDAAGNTFTKTFVFKRGDYAVNVNYSVQNAGEKPLEVSTFGQLKQSVNLPPHRDTGSSNFALHTFRGAAYSTPDEKYEKYKFDTIADNENLNVSSKGGWVAMLQQYFATAWIPRNDGTNNFYTANLGNGIVAIGYKAQPVLVQPGQTGAMTSTLWVGPEIQDKMAAVAPHLDLTVDYGWLWFISQPLFKLLKWIHSFVGNWGFSIIIITFIVRGIMYPLTKAQYTSMAKMRMLQPKIQAMRERLGDDKQRQSQEMMALYKAEKVNPLGGCFPLIIQMPIFLALYYMLMGSIELRHAPFALWIHDLSAQDPYYILPILMGVTMFFIQKMSPTTVTDPMQQKIMTFMPVIFTVFFLWFPSGLVLYYIVSNLVTIIQQQLIYRGLEKRGLHSREKKKS.

The helical transmembrane segment at 6 to 26 threads the bilayer; sequence NLLVIALLFVSFMIWQAWEQD. The disordered stretch occupies residues 28 to 56; the sequence is NPQPQTQQTTQTTTTAAGSAADQGVPASG. Low complexity predominate over residues 29 to 42; it reads PQPQTQQTTQTTTT. The next 4 membrane-spanning stretches (helical) occupy residues 350–370, 424–444, 458–478, and 499–519; these read FVGN…GIMY, FPLI…MGSI, LSAQ…MFFI, and PVIF…YYIV.

It belongs to the OXA1/ALB3/YidC family. Type 1 subfamily. Interacts with the Sec translocase complex via SecD. Specifically interacts with transmembrane segments of nascent integral membrane proteins during membrane integration.

The protein resides in the cell inner membrane. Functionally, required for the insertion and/or proper folding and/or complex formation of integral membrane proteins into the membrane. Involved in integration of membrane proteins that insert both dependently and independently of the Sec translocase complex, as well as at least some lipoproteins. Aids folding of multispanning membrane proteins. The polypeptide is Membrane protein insertase YidC (Salmonella typhimurium (strain LT2 / SGSC1412 / ATCC 700720)).